The chain runs to 627 residues: E3 ubiquitin-protein ligase DTX1 (627 aa).

2 consecutive WWE domains span residues 14 to 94 (GLGF…PVRR) and 95 to 171 (NFYD…RLRR). Disordered stretches follow at residues 222–254 (QRRK…ALVV), 269–327 (PATG…ALPV), and 368–398 (PPVS…KSKN). 2 stretches are compositionally biased toward pro residues: residues 230-248 (PAAP…PGGP) and 275-287 (EPAP…PRSP). Residues 240–243 (PPPL) carry the SH3-binding motif. A compositionally biased stretch (polar residues) spans 296–314 (PGQNNLSRPGPQRSTSVSA). Basic residues predominate over residues 386-396 (RKTKKKHLKKS). The RING-type zinc finger occupies 418-479 (CTICMERLVT…DGSLQCPTCK (62 aa)).

The protein belongs to the Deltex family. In terms of assembly, homodimer. May form a heterodimer with other members of the Deltex family. Interacts with NOTCH1 via its N-terminal region and EIF3F, the interaction is required for NOTCH1 deubiquitination. Interacts with EP300. Forms a heterodimer with BBAP; the heterodimerization leading to an increase of in vitro ubiquitin ligase activity. Interacts with ITCH. Ubiquitinated; undergoes 'Lys-29'-linked polyubiquitination catalyzed by ITCH. As to expression, predominantly expressed in the brain and testis. Weakly expressed in the thymus, spleen and ovary. Predominantly expressed in regions containing post-mitotic differentiating neurons.

The protein localises to the cytoplasm. The protein resides in the nucleus. It carries out the reaction S-ubiquitinyl-[E2 ubiquitin-conjugating enzyme]-L-cysteine + [acceptor protein]-L-lysine = [E2 ubiquitin-conjugating enzyme]-L-cysteine + N(6)-ubiquitinyl-[acceptor protein]-L-lysine.. It participates in protein modification; protein ubiquitination. Regulator of Notch signaling, a signaling pathway involved in cell-cell communications that regulates a broad spectrum of cell-fate determinations. Mainly acts as a positive regulator of Notch, but it also acts as a negative regulator, depending on the developmental and cell context. Mediates the antineural activity of Notch, possibly by inhibiting the transcriptional activation mediated by MATCH1. Involved in neurogenesis, lymphogenesis and myogenesis, and may also be involved in MZB (Marginal zone B) cell differentiation. Promotes B-cell development at the expense of T-cell development, suggesting that it can antagonize NOTCH1. Functions as an ubiquitin ligase protein in vivo, mediating ubiquitination and promoting degradation of MEKK1, suggesting that it may regulate the Notch pathway via some ubiquitin ligase activity. The chain is E3 ubiquitin-protein ligase DTX1 (Dtx1) from Mus musculus (Mouse).